The primary structure comprises 438 residues: uncharacterized protein (438 aa).

Positions 1–19 are cleaved as a signal peptide; sequence MKKLLLAASIICLASAGLA.

This is an uncharacterized protein from Rickettsia conorii (strain ATCC VR-613 / Malish 7).